The sequence spans 269 residues: Undecaprenyl-diphosphatase (269 aa).

Transmembrane regions (helical) follow at residues 4–24, 50–70, 86–106, 113–133, 146–166, 186–206, 220–240, and 246–266; these read IELW…WLPI, LWLH…PYWL, LFAI…YKVL, ATGD…GLLL, VNVV…IPGI, AVWL…ALEL, WMVT…EVLL, and LDFS…PLAA.

The protein belongs to the UppP family.

The protein localises to the cell membrane. It carries out the reaction di-trans,octa-cis-undecaprenyl diphosphate + H2O = di-trans,octa-cis-undecaprenyl phosphate + phosphate + H(+). Its function is as follows. Catalyzes the dephosphorylation of undecaprenyl diphosphate (UPP). The sequence is that of Undecaprenyl-diphosphatase from Methanopyrus kandleri (strain AV19 / DSM 6324 / JCM 9639 / NBRC 100938).